The chain runs to 471 residues: Collagenase 3 (471 aa).

The signal sequence occupies residues 1-19 (MQPGVLAACLLLSWTHCWS). Positions 20-103 (LPLLNSNEDD…PRCGVPDVGE (84 aa)) are cleaved as a propeptide — activation peptide. The short motif at 94–101 (PRCGVPDV) is the Cysteine switch element. Cysteine 96 contacts Zn(2+). The N-linked (GlcNAc...) asparagine glycan is linked to asparagine 117. Aspartate 128 is a Ca(2+) binding site. N-linked (GlcNAc...) asparagine glycans are attached at residues asparagine 152 and asparagine 158. Ca(2+) is bound at residue aspartate 162. Residues histidine 172 and aspartate 174 each contribute to the Zn(2+) site. The segment at 176–246 (YPFDGPSGLL…GALMFPIYTY (71 aa)) is interaction with TIMP2. Ca(2+) contacts are provided by aspartate 179, glycine 180, serine 182, and leucine 184. A Zn(2+)-binding site is contributed by histidine 187. Residues asparagine 194, glycine 196, and aspartate 198 each coordinate Ca(2+). Histidine 200 is a Zn(2+) binding site. Residues aspartate 202, aspartate 203, and glutamate 205 each coordinate Ca(2+). Zn(2+) is bound at residue histidine 222. The active site involves glutamate 223. Zn(2+) is bound by residues histidine 226, histidine 232, and methionine 240. A disordered region spans residues 263–284 (QSLYGPGDEDPNPKHPKTPDKC). Residues 268-471 (PGDEDPNPKH…VMPTNSLLWC (204 aa)) are interaction with collagen. Residues 273 to 284 (PNPKHPKTPDKC) are compositionally biased toward basic and acidic residues. Hemopexin repeat units lie at residues 281 to 330 (PDKC…WPEL), 331 to 377 (PNRI…GFPR), 379 to 427 (VKKI…FPGI), and 428 to 471 (GGKV…LLWC). Residues cysteine 284 and cysteine 471 are joined by a disulfide bond. Ca(2+) contacts are provided by aspartate 291, isoleucine 293, aspartate 335, and alanine 337. The residue at position 366 (tyrosine 366) is a Phosphotyrosine; by PKDCC. Residues serine 383 and alanine 385 each coordinate Ca(2+). N-linked (GlcNAc...) asparagine glycosylation is present at asparagine 409. Ca(2+)-binding residues include aspartate 432 and valine 434.

Belongs to the peptidase M10A family. Ca(2+) serves as cofactor. Requires Zn(2+) as cofactor. In terms of processing, the proenzyme is activated by removal of the propeptide; this cleavage can be effected by other matrix metalloproteinases, such as MMP2, MMP3 and MMP14 and may involve several cleavage steps. Cleavage can also be autocatalytic, after partial maturation by another protease or after treatment with 4-aminophenylmercuric acetate (APMA) (in vitro). N-glycosylated. Post-translationally, tyrosine phosphorylated by PKDCC/VLK.

The protein resides in the secreted. Its subcellular location is the extracellular space. It is found in the extracellular matrix. Plays a role in the degradation of extracellular matrix proteins including fibrillar collagen, fibronectin, TNC and ACAN. Cleaves triple helical collagens, including type I, type II and type III collagen, but has the highest activity with soluble type II collagen. Can also degrade collagen type IV, type XIV and type X. May also function by activating or degrading key regulatory proteins, such as TGFB1 and CCN2. Plays a role in wound healing, tissue remodeling, cartilage degradation, bone development, bone mineralization and ossification. Required for normal embryonic bone development and ossification. Plays a role in the healing of bone fractures via endochondral ossification. Plays a role in wound healing, probably by a mechanism that involves proteolytic activation of TGFB1 and degradation of CCN2. Plays a role in keratinocyte migration during wound healing. May play a role in cell migration and in tumor cell invasion. This is Collagenase 3 (MMP13) from Oryctolagus cuniculus (Rabbit).